The primary structure comprises 731 residues: 1,4-alpha-glucan branching enzyme GlgB 2 (731 aa).

The Nucleophile role is filled by Asp-410. The active-site Proton donor is the Glu-463.

Belongs to the glycosyl hydrolase 13 family. GlgB subfamily. Monomer.

The catalysed reaction is Transfers a segment of a (1-&gt;4)-alpha-D-glucan chain to a primary hydroxy group in a similar glucan chain.. The protein operates within glycan biosynthesis; glycogen biosynthesis. In terms of biological role, catalyzes the formation of the alpha-1,6-glucosidic linkages in glycogen by scission of a 1,4-alpha-linked oligosaccharide from growing alpha-1,4-glucan chains and the subsequent attachment of the oligosaccharide to the alpha-1,6 position. This is 1,4-alpha-glucan branching enzyme GlgB 2 from Xanthomonas oryzae pv. oryzae (strain MAFF 311018).